We begin with the raw amino-acid sequence, 382 residues long: Ustilagic acid biosynthesis cluster protein orf2 (382 aa).

Over residues 1–20 the composition is skewed to polar residues; it reads MLQEAKVSTHTSNPLSQSVP. Residues 1–22 are disordered; that stretch reads MLQEAKVSTHTSNPLSQSVPQY.

Its pathway is secondary metabolite biosynthesis. Its function is as follows. Part of the gene cluster that mediates the biosynthesis of the glycolipid biosurfactant ustilagic acid (UA). UA is a secreted cellobiose glycolipid that is toxic for many microorganisms and confers biocontrol activity to U.maydis. UA consists of 15,16-dihydroxypalmitic or 2,15,16-trihydroxypalmitic acid, which is O-glycosidically linked to cellobiose at its terminal hydroxyl group. In addition, the cellobiose moiety is acetylated and acylated with a short-chain hydroxy fatty acid. UA biosynthesis starts with omega-hydroxylation of palmitic acid catalyzed by the cytochrome P450 monooxygenase cyp1. Terminal hydroxylation of palmitic acid precedes subterminal hydroxylation catalyzed by the cytochrome P450 monooxygenase cyp2. Sequential glucosylation of the hydroxy fatty acid is probably catalyzed by the glycosyltransferase ugt1. The cellobiose lipid is further decorated by acetylation of the proximal glucose residue and by acylation with a short-chain beta-hydroxy fatty acid at the distal glucose residue. The acyltransferase uat1 may be a good candidate for catalyzing either acetylation or acylation of the cellobiose lipid. The fatty acid synthase fas2 may be involved in synthesis of the carbon backbone of the short-chain beta-hydroxy fatty acid esterified to the cellobiose disaccharide. The secreted UA consists of a mixture of both alpha-hydroxylated and non-hydroxylated glycolipids; therefore, alpha-hydroxylation of the long-chain fatty, catalyzed by the fatty acid hydroxylase ahd1, occurs late in UA biosynthesis and may be the last step before secretion. The sequence is that of Ustilagic acid biosynthesis cluster protein orf2 from Mycosarcoma maydis (Corn smut fungus).